The primary structure comprises 211 residues: Protein Nef (211 aa).

Positions 1–38 (MGNAWSKSKFAGWSEVRDRMRRSSSDPQQPCAPGVGAV) are disordered. A lipid anchor (N-myristoyl glycine; by host) is attached at Gly-2. Phosphoserine; by host is present on Ser-6. Basic and acidic residues predominate over residues 15–24 (EVRDRMRRSS). Residues 67–70 (KDED) form an acidic; interacts with host PACS1 and PACS2; stabilizes the interaction of NEF/MHC-I with host AP1M1; necessary for MHC-I internalization region. An SH3-binding; interaction with Src family tyrosine kinases region spans residues 74-83 (PVRPQVPLRP). The PxxP; stabilizes the interaction of NEF/MHC-I with host AP1M1; necessary for MHC-I internalization motif lies at 77 to 80 (PQVP). The interval 113 to 129 (EILDLWIYHTQGFFPDW) is mediates dimerization, Nef-PTE1 interaction. Residues 153–186 (VSAEEAERLGNTNEDASLLHPACNHGAEDAHGEI) are binding to ATP6V1H. The Dileucine internalization motif; necessary for CD4 internalization motif lies at 170–171 (LL). Positions 180–181 (ED) match the Diacidic; necessary for CD4 internalization motif.

The protein belongs to the lentivirus primate group Nef protein family. Monomer; cytosolic form. Homodimer; membrane bound form. Interacts with Nef associated p21-activated kinase (PAK2); this interaction activates PAK2. Associates with the Nef-MHC-I-AP1 complex; this complex is required for MHC-I internalization. Interacts (via C-terminus) with host PI3-kinase. Interacts with host PACS1; this interaction seems to be weak. Interacts with host PACS2. Interacts with host LCK and MAPK3; these interactions inhibit the kinase activity of the latter. Interacts with host ATP6V1H; this interaction may play a role in CD4 endocytosis. Associates with the CD4-Nef-AP2 complex; this complex is required for CD4 internalization. Interacts with host AP2 subunit alpha and AP2 subunit sigma2. Interacts with TCR-zeta chain; this interaction up-regulates the Fas ligand (FasL) surface expression. Interacts with host HCK, LYN, and SRC; these interactions activate the Src family kinases. Interacts with MAP3K5; this interaction inhibits the Fas and TNFR-mediated death signals. Interacts with beta-COP and PTE1. Interacts with human RACK1; this increases Nef phosphorylation by PKC. Interacts with TP53; this interaction decreases the half-life of TP53, protecting the infected cell against p53-mediated apoptosis. The virion-associated Nef proteins are cleaved by the viral protease to release the soluble C-terminal core protein. Nef is probably cleaved concomitantly with viral structural proteins on maturation of virus particles. Post-translationally, myristoylated. In terms of processing, phosphorylated on serine residues, probably by host PKCdelta and theta.

The protein resides in the host cell membrane. It localises to the virion. The protein localises to the secreted. Its subcellular location is the host Golgi apparatus membrane. Functionally, factor of infectivity and pathogenicity, required for optimal virus replication. Alters numerous pathways of T-lymphocyte function and down-regulates immunity surface molecules in order to evade host defense and increase viral infectivity. Alters the functionality of other immunity cells, like dendritic cells, monocytes/macrophages and NK cells. In infected CD4(+) T-lymphocytes, down-regulates the surface MHC-I, mature MHC-II, CD4, CD28, CCR5 and CXCR4 molecules. Mediates internalization and degradation of host CD4 through the interaction of with the cytoplasmic tail of CD4, the recruitment of AP-2 (clathrin adapter protein complex 2), internalization through clathrin coated pits, and subsequent transport to endosomes and lysosomes for degradation. Diverts host MHC-I molecules to the trans-Golgi network-associated endosomal compartments by an endocytic pathway to finally target them for degradation. MHC-I down-regulation may involve AP-1 (clathrin adapter protein complex 1) or possibly Src family kinase-ZAP70/Syk-PI3K cascade recruited by PACS2. In consequence infected cells are masked for immune recognition by cytotoxic T-lymphocytes. Decreasing the number of immune receptors also prevents reinfection by more HIV particles (superinfection). Down-regulates host SERINC3 and SERINC5 thereby excluding these proteins from the viral particles. Virion infectivity is drastically higher when SERINC3 or SERINC5 are excluded from the viral envelope, because these host antiviral proteins impair the membrane fusion event necessary for subsequent virion penetration. Its function is as follows. Bypasses host T-cell signaling by inducing a transcriptional program nearly identical to that of anti-CD3 cell activation. Interaction with TCR-zeta chain up-regulates the Fas ligand (FasL). Increasing surface FasL molecules and decreasing surface MHC-I molecules on infected CD4(+) cells send attacking cytotoxic CD8+ T-lymphocytes into apoptosis. In terms of biological role, plays a role in optimizing the host cell environment for viral replication without causing cell death by apoptosis. Protects the infected cells from apoptosis in order to keep them alive until the next virus generation is ready to strike. Inhibits the Fas and TNFR-mediated death signals by blocking MAP3K5/ASK1. Decreases the half-life of TP53, protecting the infected cell against p53-mediated apoptosis. Inhibits the apoptotic signals regulated by the Bcl-2 family proteins through the formation of a Nef/PI3-kinase/PAK2 complex that leads to activation of PAK2 and induces phosphorylation of host BAD. Functionally, extracellular Nef protein targets CD4(+) T-lymphocytes for apoptosis by interacting with CXCR4 surface receptors. The protein is Protein Nef of Human immunodeficiency virus type 1 group O (isolate MVP5180) (HIV-1).